Reading from the N-terminus, the 217-residue chain is uncharacterized protein (217 aa).

The next 2 helical transmembrane spans lie at 151-171 and 177-197; these read LIPF…HSLF and ISFH…FILF.

The protein resides in the mitochondrion membrane. This is an uncharacterized protein from Schizosaccharomyces pombe (strain 972 / ATCC 24843) (Fission yeast).